The sequence spans 177 residues: B9 domain-containing protein 2 (177 aa).

One can recognise a C2 B9-type domain in the interval 2 to 118 (AEVHIIGQIL…EIGTWKVAPN (117 aa)).

The protein belongs to the B9D family. In terms of assembly, probable component of the tectonic-like complex (also named MKS complex), composed of B9d1, B9d2, Cc2d2a, Mks1 and tctn. Expressed in chordotonal neurons in the antennae (at protein level). Expressed in spermatids (at protein level).

The protein resides in the cytoplasm. It localises to the cytoskeleton. The protein localises to the cilium basal body. Probable component of the tectonic-like complex (also named MKS complex), a complex localized at the transition zone of primary cilia. Has a role in ciliary structure and function. In Drosophila melanogaster (Fruit fly), this protein is B9 domain-containing protein 2.